The chain runs to 499 residues: Serine/threonine protein phosphatase 2A 57 kDa regulatory subunit B' beta isoform (499 aa).

Residues 1-13 (MFKKIMKGGHRKP) are compositionally biased toward basic residues. Residues 1–65 (MFKKIMKGGH…PVTATPPPPP (65 aa)) are disordered.

It belongs to the phosphatase 2A regulatory subunit B56 family. As to quaternary structure, PP2A consists of a common heteromeric enzyme, composed of a catalytic subunit (subunits C), a constant regulatory subunit (subunit A), and a variety of regulatory subunits such as subunits B (the R2/B/PR55/B55, R3/B''/PR72/PR130/PR59 and R5/B'/B56 families). Interacts with BZR1. Interacts with BRI1. Interacts with SRK2E/OST1. Expressed ubiquitously, higher levels in cotyledons and flowers.

It is found in the nucleus. It localises to the cytoplasm. In terms of biological role, the B regulatory subunit may modulate substrate selectivity and catalytic activity, and may also direct the localization of the catalytic enzyme to a particular subcellular compartment. Required for the formation of the PP2A holoenzyme that positively regulates brassinosteroid signaling by dephosphorylating and activating BZR1. This Arabidopsis thaliana (Mouse-ear cress) protein is Serine/threonine protein phosphatase 2A 57 kDa regulatory subunit B' beta isoform (B'BETA).